The following is a 112-amino-acid chain: MAGKTVTRADLAESVFRKVGLSRTESAELVETIIDEICNAITRGEVVKLSSFATFQIREKNERIGRNPKTGEEVPISPRRVMTFKASNVLKQRILKAHTARKAKQKGQKAGV.

It belongs to the bacterial histone-like protein family. In terms of assembly, heterodimer of an alpha and a beta chain.

Its function is as follows. This protein is one of the two subunits of integration host factor, a specific DNA-binding protein that functions in genetic recombination as well as in transcriptional and translational control. This Agrobacterium fabrum (strain C58 / ATCC 33970) (Agrobacterium tumefaciens (strain C58)) protein is Integration host factor subunit alpha.